The sequence spans 413 residues: NAD-dependent dihydropyrimidine dehydrogenase subunit PreT (413 aa).

Glu287 serves as a coordination point for NAD(+).

It belongs to the NADH dehydrogenase family. In terms of assembly, heterotetramer of 2 PreA and 2 PreT subunits.

The catalysed reaction is 5,6-dihydrouracil + NAD(+) = uracil + NADH + H(+). It catalyses the reaction 5,6-dihydrothymine + NAD(+) = thymine + NADH + H(+). Functionally, involved in pyrimidine base degradation. Catalyzes physiologically the reduction of uracil to 5,6-dihydrouracil (DHU) by using NADH as a specific cosubstrate. It also catalyzes the reverse reaction and the reduction of thymine to 5,6-dihydrothymine (DHT). The polypeptide is NAD-dependent dihydropyrimidine dehydrogenase subunit PreT (preT) (Salmonella typhimurium (strain LT2 / SGSC1412 / ATCC 700720)).